We begin with the raw amino-acid sequence, 260 residues long: uncharacterized protein (260 aa).

This sequence belongs to the methyltransferase superfamily.

It localises to the cytoplasm. It is found in the nucleus. Probable methyltransferase. This is an uncharacterized protein from Schizosaccharomyces pombe (strain 972 / ATCC 24843) (Fission yeast).